The chain runs to 473 residues: Siroheme synthase 1 (473 aa).

The tract at residues 1–204 (MDYFPIFCQL…NDHVQADQHV (204 aa)) is precorrin-2 dehydrogenase /sirohydrochlorin ferrochelatase. NAD(+) is bound by residues 22–23 (EI) and 43–44 (CE). A Phosphoserine modification is found at serine 128. The interval 216-473 (GEVVLVGAGP…KVTECVAHVG (258 aa)) is uroporphyrinogen-III C-methyltransferase. Proline 225 contributes to the S-adenosyl-L-methionine binding site. Residue aspartate 248 is the Proton acceptor of the active site. The Proton donor role is filled by lysine 270. Residues 301–303 (GGD), isoleucine 306, 331–332 (TA), methionine 382, and glycine 411 each bind S-adenosyl-L-methionine.

The protein in the N-terminal section; belongs to the precorrin-2 dehydrogenase / sirohydrochlorin ferrochelatase family. In the C-terminal section; belongs to the precorrin methyltransferase family.

The catalysed reaction is uroporphyrinogen III + 2 S-adenosyl-L-methionine = precorrin-2 + 2 S-adenosyl-L-homocysteine + H(+). It catalyses the reaction precorrin-2 + NAD(+) = sirohydrochlorin + NADH + 2 H(+). It carries out the reaction siroheme + 2 H(+) = sirohydrochlorin + Fe(2+). It participates in cofactor biosynthesis; adenosylcobalamin biosynthesis; precorrin-2 from uroporphyrinogen III: step 1/1. It functions in the pathway cofactor biosynthesis; adenosylcobalamin biosynthesis; sirohydrochlorin from precorrin-2: step 1/1. Its pathway is porphyrin-containing compound metabolism; siroheme biosynthesis; precorrin-2 from uroporphyrinogen III: step 1/1. The protein operates within porphyrin-containing compound metabolism; siroheme biosynthesis; siroheme from sirohydrochlorin: step 1/1. It participates in porphyrin-containing compound metabolism; siroheme biosynthesis; sirohydrochlorin from precorrin-2: step 1/1. Functionally, multifunctional enzyme that catalyzes the SAM-dependent methylations of uroporphyrinogen III at position C-2 and C-7 to form precorrin-2 via precorrin-1. Then it catalyzes the NAD-dependent ring dehydrogenation of precorrin-2 to yield sirohydrochlorin. Finally, it catalyzes the ferrochelation of sirohydrochlorin to yield siroheme. This chain is Siroheme synthase 1, found in Yersinia pestis (strain Pestoides F).